A 396-amino-acid chain; its full sequence is Elongation factor Tu (396 aa).

A tr-type G domain is found at 10-206 (KPHINVGTIG…ALDSYIPEPQ (197 aa)). The segment at 19–26 (GHVDHGKT) is G1. Residue 19–26 (GHVDHGKT) coordinates GTP. Position 26 (T26) interacts with Mg(2+). Residues 60–64 (GITIN) are G2. Residues 81–84 (DCPG) are G3. Residues 81 to 85 (DCPGH) and 136 to 139 (NKAD) contribute to the GTP site. Residues 136–139 (NKAD) are G4. The interval 174–176 (SAL) is G5.

Belongs to the TRAFAC class translation factor GTPase superfamily. Classic translation factor GTPase family. EF-Tu/EF-1A subfamily. As to quaternary structure, monomer.

The protein resides in the cytoplasm. The catalysed reaction is GTP + H2O = GDP + phosphate + H(+). Functionally, GTP hydrolase that promotes the GTP-dependent binding of aminoacyl-tRNA to the A-site of ribosomes during protein biosynthesis. The polypeptide is Elongation factor Tu (Nitrosospira multiformis (strain ATCC 25196 / NCIMB 11849 / C 71)).